A 387-amino-acid polypeptide reads, in one-letter code: Protochlorophyllide reductase A, chloroplastic (387 aa).

Residues Met-1 to Ser-35 constitute a chloroplast transit peptide.

This sequence belongs to the short-chain dehydrogenases/reductases (SDR) family. POR subfamily.

It localises to the plastid. The protein localises to the chloroplast. It catalyses the reaction chlorophyllide a + NADP(+) = protochlorophyllide a + NADPH + H(+). It participates in porphyrin-containing compound metabolism; chlorophyll biosynthesis. Functionally, phototransformation of protochlorophyllide (Pchlide) to chlorophyllide (Chlide). This is Protochlorophyllide reductase A, chloroplastic (PORA) from Oryza sativa subsp. japonica (Rice).